Consider the following 151-residue polypeptide: Late embryogenesis abundant protein Lea14-A (151 aa).

Belongs to the LEA type 2 family.

In Gossypium hirsutum (Upland cotton), this protein is Late embryogenesis abundant protein Lea14-A (LEA14-A).